We begin with the raw amino-acid sequence, 263 residues long: Endonuclease 8 (263 aa).

The active-site Schiff-base intermediate with DNA is proline 2. Glutamate 3 serves as the catalytic Proton donor. Catalysis depends on lysine 53, which acts as the Proton donor; for beta-elimination activity. DNA contacts are provided by glutamine 70, arginine 125, and asparagine 169. An FPG-type zinc finger spans residues 229 to 263; it reads KVFHREGESCERCGGTIERTMLSSRPFYWCPHCQS. Arginine 253 functions as the Proton donor; for delta-elimination activity in the catalytic mechanism.

It belongs to the FPG family. It depends on Zn(2+) as a cofactor.

It carries out the reaction 2'-deoxyribonucleotide-(2'-deoxyribose 5'-phosphate)-2'-deoxyribonucleotide-DNA = a 3'-end 2'-deoxyribonucleotide-(2,3-dehydro-2,3-deoxyribose 5'-phosphate)-DNA + a 5'-end 5'-phospho-2'-deoxyribonucleoside-DNA + H(+). In terms of biological role, involved in base excision repair of DNA damaged by oxidation or by mutagenic agents. Acts as a DNA glycosylase that recognizes and removes damaged bases. Has a preference for oxidized pyrimidines, such as thymine glycol, 5,6-dihydrouracil and 5,6-dihydrothymine. Has AP (apurinic/apyrimidinic) lyase activity and introduces nicks in the DNA strand. Cleaves the DNA backbone by beta-delta elimination to generate a single-strand break at the site of the removed base with both 3'- and 5'-phosphates. The sequence is that of Endonuclease 8 from Pectobacterium atrosepticum (strain SCRI 1043 / ATCC BAA-672) (Erwinia carotovora subsp. atroseptica).